We begin with the raw amino-acid sequence, 199 residues long: Nucleoside triphosphate pyrophosphatase (199 aa).

The active-site Proton acceptor is D76.

The protein belongs to the Maf family. Requires a divalent metal cation as cofactor.

The protein localises to the cytoplasm. The enzyme catalyses a ribonucleoside 5'-triphosphate + H2O = a ribonucleoside 5'-phosphate + diphosphate + H(+). The catalysed reaction is a 2'-deoxyribonucleoside 5'-triphosphate + H2O = a 2'-deoxyribonucleoside 5'-phosphate + diphosphate + H(+). Its function is as follows. Nucleoside triphosphate pyrophosphatase. May have a dual role in cell division arrest and in preventing the incorporation of modified nucleotides into cellular nucleic acids. The sequence is that of Nucleoside triphosphate pyrophosphatase from Caulobacter vibrioides (strain ATCC 19089 / CIP 103742 / CB 15) (Caulobacter crescentus).